Consider the following 469-residue polypeptide: tRNA modification GTPase MnmE (469 aa).

3 residues coordinate (6S)-5-formyl-5,6,7,8-tetrahydrofolate: R26, E88, and R127. The 169-residue stretch at 222–390 (GLKVAIVGRP…LEDAILHLVQ (169 aa)) folds into the TrmE-type G domain. N232 lines the K(+) pocket. Residues 232 to 237 (NVGKSS), 251 to 257 (TDLPGTT), 276 to 279 (DTAG), and 344 to 347 (NKAD) each bind GTP. S236 is a Mg(2+) binding site. K(+) contacts are provided by T251, L253, and T256. T257 lines the Mg(2+) pocket. A (6S)-5-formyl-5,6,7,8-tetrahydrofolate-binding site is contributed by K469.

The protein belongs to the TRAFAC class TrmE-Era-EngA-EngB-Septin-like GTPase superfamily. TrmE GTPase family. Homodimer. Heterotetramer of two MnmE and two MnmG subunits. K(+) serves as cofactor.

It is found in the cytoplasm. Its function is as follows. Exhibits a very high intrinsic GTPase hydrolysis rate. Involved in the addition of a carboxymethylaminomethyl (cmnm) group at the wobble position (U34) of certain tRNAs, forming tRNA-cmnm(5)s(2)U34. The sequence is that of tRNA modification GTPase MnmE from Synechococcus elongatus.